The sequence spans 163 residues: UPF0262 protein RPB_4349 (163 aa).

Belongs to the UPF0262 family.

In Rhodopseudomonas palustris (strain HaA2), this protein is UPF0262 protein RPB_4349.